The chain runs to 443 residues: MTTETLIITGGHVLQLGQDPGIIEANIRVNCITGKITNIDEDPVSAQQRDANDEIIRTLDAAGCVVMPGLVNAHTHAAMTLLRGYADDKPLQAWLREDIWPAEAEMTPTGVRAGTELAIVEMIRSGTTAFADMYFHVPEVVAAIKNAGVRARVGHGVVTAGKDDEAARNDLNKGLEVAQAYDGAADDRIQTAFMPHSLTTVGEEYLQEAVSEARQDNIPIHYHANETRSEVDPIVDNHNKRPLTYASGLDMLSSSDFLAHGVHLETDEIDQLAEAGASLVHCPASNMKLASGIAPIPALLDAGVTVALGTDGAASNNDLDMFDELRDAAMLGKIGADDAAAVPAAQAIHMATAGGADALGLPGGQIKEEAVADLIVVDLDSPHLTPTHNIISHLAYAARGSDVKHTVCDGTVLMQNREIQTIDVDAVVETAETQAQSLIQRMS.

Residues His74 and His76 each contribute to the Zn(2+) site. Substrate contacts are provided by Glu103 and His196. Residue His223 participates in Zn(2+) binding. Residues Glu226 and Asp311 each coordinate substrate. Asp311 contributes to the Zn(2+) binding site.

This sequence belongs to the metallo-dependent hydrolases superfamily. MTA/SAH deaminase family. Zn(2+) is required as a cofactor.

The enzyme catalyses S-adenosyl-L-homocysteine + H2O + H(+) = S-inosyl-L-homocysteine + NH4(+). The catalysed reaction is S-methyl-5'-thioadenosine + H2O + H(+) = S-methyl-5'-thioinosine + NH4(+). Catalyzes the deamination of 5-methylthioadenosine and S-adenosyl-L-homocysteine into 5-methylthioinosine and S-inosyl-L-homocysteine, respectively. Is also able to deaminate adenosine. The chain is 5-methylthioadenosine/S-adenosylhomocysteine deaminase from Haloquadratum walsbyi (strain DSM 16790 / HBSQ001).